A 195-amino-acid polypeptide reads, in one-letter code: ATP-dependent Clp protease proteolytic subunit (195 aa).

S98 (nucleophile) is an active-site residue. The active site involves H123.

This sequence belongs to the peptidase S14 family. Fourteen ClpP subunits assemble into 2 heptameric rings which stack back to back to give a disk-like structure with a central cavity, resembling the structure of eukaryotic proteasomes.

Its subcellular location is the cytoplasm. The enzyme catalyses Hydrolysis of proteins to small peptides in the presence of ATP and magnesium. alpha-casein is the usual test substrate. In the absence of ATP, only oligopeptides shorter than five residues are hydrolyzed (such as succinyl-Leu-Tyr-|-NHMec, and Leu-Tyr-Leu-|-Tyr-Trp, in which cleavage of the -Tyr-|-Leu- and -Tyr-|-Trp bonds also occurs).. In terms of biological role, cleaves peptides in various proteins in a process that requires ATP hydrolysis. Has a chymotrypsin-like activity. Plays a major role in the degradation of misfolded proteins. This is ATP-dependent Clp protease proteolytic subunit from Staphylococcus aureus (strain Mu3 / ATCC 700698).